Consider the following 402-residue polypeptide: tRNA pseudouridine synthase Pus10 (402 aa).

Asp-215 acts as the Nucleophile in catalysis. Residues 370 to 402 (ERGGHPGARGGTRRRPRKGPARPAGGRDRPRKT) are disordered. The span at 380-389 (GTRRRPRKGP) shows a compositional bias: basic residues.

Belongs to the pseudouridine synthase Pus10 family.

It catalyses the reaction uridine(54) in tRNA = pseudouridine(54) in tRNA. It carries out the reaction uridine(55) in tRNA = pseudouridine(55) in tRNA. Its function is as follows. Responsible for synthesis of pseudouridine from uracil-54 and uracil-55 in the psi GC loop of transfer RNAs. The sequence is that of tRNA pseudouridine synthase Pus10 from Cenarchaeum symbiosum (strain A).